The primary structure comprises 1081 residues: Homeobox protein onecut (1081 aa).

3 disordered regions span residues 274–326 (SQDS…NDRL), 481–504 (SHNG…VNGG), and 653–688 (PTPP…SQEP). Residues 278–301 (DKEDCEENDDGDAEGDLENEDDDE) are compositionally biased toward acidic residues. Residues 311–326 (LSHSSYQTLTSVNDRL) are compositionally biased toward polar residues. Basic and acidic residues-rich tracts occupy residues 485 to 499 (NKKE…HRPA) and 658 to 686 (LRDD…DKSQ). The segment at residues 751–837 (IANSSDMEEI…QRMSALRMAA (87 aa)) is a DNA-binding region (CUT). The interval 844-875 (APLSSGMSLGSATGPSGSTGTIPTDLDPHGGP) is disordered. Residues 851–867 (SLGSATGPSGSTGTIPT) show a composition bias toward low complexity. The homeobox DNA-binding region spans 918–977 (PQPKKPRLVFTDLQRRTLQAIFKETKRPSKEMQVTIARQLGLEPTTVGNFFMNARRRSMD). Residues 978–1081 (KWRDDDSKST…DTNDPNGDML (104 aa)) form a disordered region. A compositionally biased stretch (basic and acidic residues) spans 995-1006 (QQQDEQQKDNAH). Residues 1007–1041 (THSQSQIQDQNHSQNQAIHNSMSQDPYSNLHTTAM) show a composition bias toward polar residues. Residues 1047 to 1056 (FDEDADMDLE) are compositionally biased toward acidic residues. Positions 1057 to 1073 (LESHDFDLVDPDEHGDT) are enriched in basic and acidic residues.

Belongs to the CUT homeobox family. Neural-specific.

Its subcellular location is the nucleus. Functionally, transcriptional regulator. Binds and recognize ATTG sites. The polypeptide is Homeobox protein onecut (onecut) (Drosophila melanogaster (Fruit fly)).